Consider the following 70-residue polypeptide: Eglin C (70 aa).

Belongs to the protease inhibitor I13 (potato type I serine protease inhibitor) family.

Its function is as follows. Inhibits both elastase and cathepsin G. The chain is Eglin C from Hirudo medicinalis (Medicinal leech).